A 362-amino-acid chain; its full sequence is tRNA N6-adenosine threonylcarbamoyltransferase (362 aa).

Residues H120 and H124 each coordinate Fe cation. Substrate-binding positions include L142–G146, D175, G188, and N288. D316 provides a ligand contact to Fe cation. The span at R342 to A351 shows a compositional bias: basic and acidic residues. The interval R342–A362 is disordered.

It belongs to the KAE1 / TsaD family. It depends on Fe(2+) as a cofactor.

The protein localises to the cytoplasm. It carries out the reaction L-threonylcarbamoyladenylate + adenosine(37) in tRNA = N(6)-L-threonylcarbamoyladenosine(37) in tRNA + AMP + H(+). Required for the formation of a threonylcarbamoyl group on adenosine at position 37 (t(6)A37) in tRNAs that read codons beginning with adenine. Is involved in the transfer of the threonylcarbamoyl moiety of threonylcarbamoyl-AMP (TC-AMP) to the N6 group of A37, together with TsaE and TsaB. TsaD likely plays a direct catalytic role in this reaction. This Rhodospirillum rubrum (strain ATCC 11170 / ATH 1.1.1 / DSM 467 / LMG 4362 / NCIMB 8255 / S1) protein is tRNA N6-adenosine threonylcarbamoyltransferase.